Consider the following 172-residue polypeptide: Adrenodoxin-like protein 1, mitochondrial (172 aa).

A 2Fe-2S ferredoxin-type domain is found at 57–159 (VNITYVDKDG…GMELELPKAT (103 aa)). [2Fe-2S] cluster contacts are provided by C94, C100, C103, and C140.

Belongs to the adrenodoxin/putidaredoxin family. Requires [2Fe-2S] cluster as cofactor.

The protein localises to the mitochondrion matrix. In terms of biological role, required for ecdysteroidogenesis in the prothoracic gland which is necessary for larval to pupal transition. This is Adrenodoxin-like protein 1, mitochondrial from Drosophila melanogaster (Fruit fly).